The sequence spans 195 residues: Peptidyl-tRNA hydrolase (195 aa).

Tyr-17 is a tRNA binding site. Catalysis depends on His-22, which acts as the Proton acceptor. TRNA-binding residues include Tyr-68, Asn-70, and Asn-116.

It belongs to the PTH family. Monomer.

Its subcellular location is the cytoplasm. The enzyme catalyses an N-acyl-L-alpha-aminoacyl-tRNA + H2O = an N-acyl-L-amino acid + a tRNA + H(+). Functionally, hydrolyzes ribosome-free peptidyl-tRNAs (with 1 or more amino acids incorporated), which drop off the ribosome during protein synthesis, or as a result of ribosome stalling. Its function is as follows. Catalyzes the release of premature peptidyl moieties from peptidyl-tRNA molecules trapped in stalled 50S ribosomal subunits, and thus maintains levels of free tRNAs and 50S ribosomes. This is Peptidyl-tRNA hydrolase from Shewanella sp. (strain ANA-3).